A 521-amino-acid chain; its full sequence is Protein nucleotidyltransferase YdiU (521 aa).

ATP-binding residues include Gly-109, Gly-111, Arg-112, Lys-131, Asp-143, Gly-144, Arg-194, and Arg-201. The Proton acceptor role is filled by Asp-270. Mg(2+) is bound by residues Asn-271 and Asp-280. Position 280 (Asp-280) interacts with ATP.

Belongs to the SELO family. Mg(2+) serves as cofactor. It depends on Mn(2+) as a cofactor.

It carries out the reaction L-seryl-[protein] + ATP = 3-O-(5'-adenylyl)-L-seryl-[protein] + diphosphate. It catalyses the reaction L-threonyl-[protein] + ATP = 3-O-(5'-adenylyl)-L-threonyl-[protein] + diphosphate. The catalysed reaction is L-tyrosyl-[protein] + ATP = O-(5'-adenylyl)-L-tyrosyl-[protein] + diphosphate. The enzyme catalyses L-histidyl-[protein] + UTP = N(tele)-(5'-uridylyl)-L-histidyl-[protein] + diphosphate. It carries out the reaction L-seryl-[protein] + UTP = O-(5'-uridylyl)-L-seryl-[protein] + diphosphate. It catalyses the reaction L-tyrosyl-[protein] + UTP = O-(5'-uridylyl)-L-tyrosyl-[protein] + diphosphate. Functionally, nucleotidyltransferase involved in the post-translational modification of proteins. It can catalyze the addition of adenosine monophosphate (AMP) or uridine monophosphate (UMP) to a protein, resulting in modifications known as AMPylation and UMPylation. This chain is Protein nucleotidyltransferase YdiU, found in Burkholderia pseudomallei (strain 1106a).